Consider the following 556-residue polypeptide: 2-succinyl-5-enolpyruvyl-6-hydroxy-3-cyclohexene-1-carboxylate synthase (556 aa).

It belongs to the TPP enzyme family. MenD subfamily. Homodimer. Mg(2+) serves as cofactor. It depends on Mn(2+) as a cofactor. The cofactor is thiamine diphosphate.

The catalysed reaction is isochorismate + 2-oxoglutarate + H(+) = 5-enolpyruvoyl-6-hydroxy-2-succinyl-cyclohex-3-ene-1-carboxylate + CO2. Its pathway is quinol/quinone metabolism; 1,4-dihydroxy-2-naphthoate biosynthesis; 1,4-dihydroxy-2-naphthoate from chorismate: step 2/7. The protein operates within quinol/quinone metabolism; menaquinone biosynthesis. Functionally, catalyzes the thiamine diphosphate-dependent decarboxylation of 2-oxoglutarate and the subsequent addition of the resulting succinic semialdehyde-thiamine pyrophosphate anion to isochorismate to yield 2-succinyl-5-enolpyruvyl-6-hydroxy-3-cyclohexene-1-carboxylate (SEPHCHC). This Salmonella heidelberg (strain SL476) protein is 2-succinyl-5-enolpyruvyl-6-hydroxy-3-cyclohexene-1-carboxylate synthase.